The sequence spans 146 residues: Holo-[acyl-carrier-protein] synthase (146 aa).

D8 and E61 together coordinate Mg(2+).

Belongs to the P-Pant transferase superfamily. AcpS family. Mg(2+) is required as a cofactor.

The protein localises to the cytoplasm. It catalyses the reaction apo-[ACP] + CoA = holo-[ACP] + adenosine 3',5'-bisphosphate + H(+). Functionally, transfers the 4'-phosphopantetheine moiety from coenzyme A to a Ser of acyl-carrier-protein. This Rhodopseudomonas palustris (strain TIE-1) protein is Holo-[acyl-carrier-protein] synthase.